Consider the following 336-residue polypeptide: Phospho-N-acetylmuramoyl-pentapeptide-transferase (336 aa).

10 helical membrane-spanning segments follow: residues 3-23, 53-73, 78-98, 118-138, 143-163, 174-194, 200-220, 226-246, 251-271, and 316-336; these read LTLI…PYFI, GGTV…LFSI, SLAL…IGFL, LALQ…PSGI, VFGY…FWVV, GIDG…GVIA, FDVL…FLFN, VFMG…ISIA, WTLL…MLQV, and AFLW…LYVF.

The protein belongs to the glycosyltransferase 4 family. MraY subfamily. It depends on Mg(2+) as a cofactor.

The protein localises to the cell membrane. The catalysed reaction is UDP-N-acetyl-alpha-D-muramoyl-L-alanyl-gamma-D-glutamyl-L-lysyl-D-alanyl-D-alanine + di-trans,octa-cis-undecaprenyl phosphate = Mur2Ac(oyl-L-Ala-gamma-D-Glu-L-Lys-D-Ala-D-Ala)-di-trans,octa-cis-undecaprenyl diphosphate + UMP. Its pathway is cell wall biogenesis; peptidoglycan biosynthesis. In terms of biological role, catalyzes the initial step of the lipid cycle reactions in the biosynthesis of the cell wall peptidoglycan: transfers peptidoglycan precursor phospho-MurNAc-pentapeptide from UDP-MurNAc-pentapeptide onto the lipid carrier undecaprenyl phosphate, yielding undecaprenyl-pyrophosphoryl-MurNAc-pentapeptide, known as lipid I. The chain is Phospho-N-acetylmuramoyl-pentapeptide-transferase from Streptococcus pyogenes serotype M6 (strain ATCC BAA-946 / MGAS10394).